Reading from the N-terminus, the 486-residue chain is Glutamyl-tRNA(Gln) amidotransferase subunit A (486 aa).

Catalysis depends on charge relay system residues K76 and S151. S175 serves as the catalytic Acyl-ester intermediate.

The protein belongs to the amidase family. GatA subfamily. In terms of assembly, heterotrimer of A, B and C subunits.

The enzyme catalyses L-glutamyl-tRNA(Gln) + L-glutamine + ATP + H2O = L-glutaminyl-tRNA(Gln) + L-glutamate + ADP + phosphate + H(+). In terms of biological role, allows the formation of correctly charged Gln-tRNA(Gln) through the transamidation of misacylated Glu-tRNA(Gln) in organisms which lack glutaminyl-tRNA synthetase. The reaction takes place in the presence of glutamine and ATP through an activated gamma-phospho-Glu-tRNA(Gln). This chain is Glutamyl-tRNA(Gln) amidotransferase subunit A, found in Nitrosomonas europaea (strain ATCC 19718 / CIP 103999 / KCTC 2705 / NBRC 14298).